The chain runs to 156 residues: Ribonuclease ageritin (156 aa).

A signal peptide spans 1–21 (MSESSTFTTAVVPEGEGVAPM). The active site involves His-98. N-linked (GlcNAc...) asparagine glycans are attached at residues Asn-100 and Asn-139.

It belongs to the ribotoxin-like family. Monomer. It depends on Mg(2+) as a cofactor.

Its subcellular location is the vacuole lumen. The catalysed reaction is a 28S rRNA containing guanosine-adenosine pair + H2O = an [RNA fragment]-3'-adenosine-3'-phosphate + a 5'-a hydroxy-guanosine-3'-[RNA fragment].. With respect to regulation, in contrast to most ribotoxins, activity is completely inhibited by EDTA. Fungal ribonuclease involved in fungal defense. Highly specific and highly toxic fungal endonuclease that cleaves a single phosphodiester bond in the 28S RNA of eukaryotic ribosomes at a universally conserved GAGA tetraloop of the sarcin-ricin loop (SRL). The damage of the SRL inhibits the binding of translation elongation factors and halts protein biosynthesis, ultimately resulting in the death of the target cells. Shows antitumor activity. Exerts cytotoxicity and induces apoptosis towards rat glial cells and human glioma cells, and also displays some activity towards human neurolastoma cell lines. Shows a strong entomotoxicity against Aedes aegypti larvae, yet no nematotoxicity against nematodes. This Cyclocybe aegerita (Black poplar mushroom) protein is Ribonuclease ageritin.